Here is a 465-residue protein sequence, read N- to C-terminus: Cysteine--tRNA ligase (465 aa).

Cys-27 is a binding site for Zn(2+). Positions 29–39 (PTVYNYIHIGN) match the 'HIGH' region motif. Residues Cys-207, His-232, and Glu-236 each coordinate Zn(2+). The 'KMSKS' region signature appears at 264–268 (KMSKS). Lys-267 lines the ATP pocket.

It belongs to the class-I aminoacyl-tRNA synthetase family. As to quaternary structure, monomer. Zn(2+) serves as cofactor.

It is found in the cytoplasm. The enzyme catalyses tRNA(Cys) + L-cysteine + ATP = L-cysteinyl-tRNA(Cys) + AMP + diphosphate. This chain is Cysteine--tRNA ligase, found in Clostridioides difficile (strain 630) (Peptoclostridium difficile).